A 113-amino-acid chain; its full sequence is Neocarzinostatin (113 aa).

Intrachain disulfides connect Cys-37/Cys-47 and Cys-88/Cys-93.

Belongs to the neocarzinostatin family.

NCS has antibiotic activity (for Gram-positive bacteria) and antitumor activity (for certain mouse tumors). NCS binds non-covalently to a chromophore which is the cytotoxic and mutagenic component of the antibiotic. The chromophore binds to DNA as a weak intercalator and causes single- and double-strand breaks. The polypeptide is Neocarzinostatin (ncsA) (Streptomyces malayensis).